The chain runs to 276 residues: MIVNYSSSSSEEESGSSSSPSGKRQKLDTETSEALDHGSAQRKVCKSSHLTPRLPLPESVKEMFRDSEELWTDKSEEHGGRLRSFQHERGNWATYVFFPYDPEEAFLEVLNKMMAAAEAHDIPLTVSEEFHLSLSKTVVLRHHWIQPFVQSIRTSLTHFQKFYCVAYKLKVYSNAEKTRTFLGMEVSTGTPHLLELSKIVDETMKEFNLSTFYEDPSFHISLAWCVGDQTERLKKACLLELQGLIDAHEDGPFHARLNCNELRCKTGNKVFVFPLQ.

The interval methionine 1–glutamate 58 is disordered. The active-site Proton acceptor is histidine 131. Residues histidine 131 to serine 133, tyrosine 213, and aspartate 215 to serine 221 contribute to the AMP site. UMP contacts are provided by residues tyrosine 213 and serine 217–serine 221. Residue histidine 219 is the Proton donor of the active site.

The protein belongs to the 2H phosphoesterase superfamily. USB1 family.

The protein resides in the nucleus. The enzyme catalyses a 3'-end uridylyl-uridine-RNA = a 3'-end 2',3'-cyclophospho-uridine-RNA + uridine. It carries out the reaction a 3'-end uridylyl-adenosine-RNA = a 3'-end 2',3'-cyclophospho-uridine-RNA + adenosine. 3'-5' RNA exonuclease that trims the 3' end of oligo(U) and oligo(A) tracts of the pre-U6 small nuclear RNA (snRNA) molecule, leading to the formation of a mature U6 snRNA 3' end-terminated with a 2',3'-cyclic phosphate. Participates in the U6 snRNA 3' end processing that prevents U6 snRNA degradation. In addition also removes uridines from the 3' end of U6atac snRNA and possibly the vault RNA VTRNA1-1. The polypeptide is U6 snRNA phosphodiesterase 1 (Danio rerio (Zebrafish)).